Consider the following 374-residue polypeptide: Transcription termination factor 1, mitochondrial (374 aa).

The N-terminal 37 residues, 1–37, are a transit peptide targeting the mitochondrion; it reads MASRNIWRVRRNFLFDLRGWVPQYSAEVFLKSIPFRP. Interaction with DNA regions lie at residues 146–147, 224–228, 301–308, 332–335, and 361–368; these read RS, QSTKR, SEKKFNDK, SIHT, and SQRRYEAK.

This sequence belongs to the mTERF family. As to quaternary structure, monomer. Is a phosphoprotein. While the DNA-binding activity is unaffected by the phosphorylation/dephosphorylation state, only the phosphorylated form of the protein is active for termination activity. Functioning seems to be regulated by phosphorylation.

Its subcellular location is the mitochondrion. Transcription termination factor. Binds to a 28 bp region within the tRNA(Leu(uur)) gene at a position immediately adjacent to and downstream of the 16S rRNA gene; this region comprises a tridecamer sequence critical for directing accurate termination. Binds DNA along the major grove and promotes DNA bending and partial unwinding. Promotes base flipping. Transcription termination activity appears to be polarized with highest specificity for transcripts initiated on the light strand. This is Transcription termination factor 1, mitochondrial (Mterf1) from Rattus norvegicus (Rat).